The primary structure comprises 690 residues: Protein arginine N-methyltransferase 7 (690 aa).

SAM-dependent MTase PRMT-type domains follow at residues 14–357 and 366–690; these read QNSW…YSLW and TKSV…QKKL.

The protein belongs to the class I-like SAM-binding methyltransferase superfamily. Protein arginine N-methyltransferase family. PRMT7 subfamily.

Functionally, essential arginine methyltransferase that can both catalyze the formation of omega-N monomethylarginine (MMA) and symmetrical dimethylarginine (sDMA). Specifically mediates the symmetrical dimethylation of arginine residues in the small nuclear ribonucleoproteins SmD1 and SmD3. The chain is Protein arginine N-methyltransferase 7 (Art7) from Drosophila erecta (Fruit fly).